Reading from the N-terminus, the 198-residue chain is MICOS complex subunit MIC26 (198 aa).

Positions 1–25 (MFKVIHRYVGPASLSLLTFKVYASS) are cleaved as a signal peptide. The chain crosses the membrane as a helical span at residues 108–128 (PGFFPRLGVIGFAGVVGLVLA). A glycan (O-linked (Xyl...) (chondroitin sulfate) serine) is linked at serine 162.

Belongs to the apolipoprotein O/MICOS complex subunit Mic27 family. In terms of assembly, component of the mitochondrial contact site and cristae organizing system (MICOS) complex, composed of at least MICOS10/MIC10, CHCHD3/MIC19, CHCHD6/MIC25, APOOL/MIC27, IMMT/MIC60, APOO/MIC23/MIC26 and MICOS13/MIC13. This complex was also known under the names MINOS or MitOS complex. The MICOS complex associates with mitochondrial outer membrane proteins SAMM50, MTX1 and MTX2 (together described as components of the mitochondrial outer membrane sorting assembly machinery (SAM) complex) and DNAJC11, mitochondrial inner membrane protein TMEM11 and with HSPA9. The MICOS and SAM complexes together with DNAJC11 are part of a large protein complex spanning both membranes termed the mitochondrial intermembrane space bridging (MIB) complex. Interacts with IMMT/MIC60. Interacts with MICOS10/MIC10 and APOOL/MIC27. O-glycosylation; glycosaminoglycan of chondroitin-sulfate type.

The protein resides in the mitochondrion inner membrane. The protein localises to the secreted. It is found in the mitochondrion. It localises to the endoplasmic reticulum membrane. Its subcellular location is the golgi apparatus membrane. Functionally, component of the MICOS complex, a large protein complex of the mitochondrial inner membrane that plays crucial roles in the maintenance of crista junctions, inner membrane architecture, and formation of contact sites to the outer membrane. Plays a crucial role in crista junction formation and mitochondrial function. Can induce cardiac lipotoxicity by enhancing mitochondrial respiration and fatty acid metabolism in cardiac myoblasts. Promotes cholesterol efflux from macrophage cells. Detected in HDL, LDL and VLDL. Secreted by a microsomal triglyceride transfer protein (MTTP)-dependent mechanism, probably as a VLDL-associated protein that is subsequently transferred to HDL. The chain is MICOS complex subunit MIC26 (APOO) from Bos taurus (Bovine).